Consider the following 382-residue polypeptide: ATP phosphoribosyltransferase regulatory subunit (382 aa).

Belongs to the class-II aminoacyl-tRNA synthetase family. HisZ subfamily. As to quaternary structure, heteromultimer composed of HisG and HisZ subunits.

It is found in the cytoplasm. Its pathway is amino-acid biosynthesis; L-histidine biosynthesis; L-histidine from 5-phospho-alpha-D-ribose 1-diphosphate: step 1/9. Its function is as follows. Required for the first step of histidine biosynthesis. May allow the feedback regulation of ATP phosphoribosyltransferase activity by histidine. This chain is ATP phosphoribosyltransferase regulatory subunit, found in Lacticaseibacillus paracasei (strain ATCC 334 / BCRC 17002 / CCUG 31169 / CIP 107868 / KCTC 3260 / NRRL B-441) (Lactobacillus paracasei).